The chain runs to 364 residues: MSGNTFGKLFTVTTFGESHGAALGCIIDGCPPGLELSEEDMQRDLDRRKPGTSRHTTQRREADEVRILSGVFEGKTTGTPIGLIIENTDQRSKDYSRIAAQFRPAHADYTYHHKYGARDYRGGGRSSARETAMRVAAGAVARKFLEQRLGIKVRGYLSQLGPIKTDKLDWEQVHQNPFFCPDADKVSEMEAYMDALRKEGDSIGARINVVAEGVPPGLGEPIFDRLDADLAHALMSINAVKGVEIGAGFDCIEQKGTEHRDEMTPEGFLSNNAGGVLGGISSGQPIVASIALKPTSSLRLPGKGIDVDGNPVEVITTGRHDPCVGIRATPIAEAMMAIVLMDHYLRHRGQNGDVEVTTPVLGQL.

NADP(+) is bound by residues arginine 48 and arginine 54. Residues 125 to 127 (RSS), 238 to 239 (NA), glycine 278, 293 to 297 (KPTSS), and arginine 319 contribute to the FMN site.

It belongs to the chorismate synthase family. Homotetramer. FMNH2 serves as cofactor.

It carries out the reaction 5-O-(1-carboxyvinyl)-3-phosphoshikimate = chorismate + phosphate. It functions in the pathway metabolic intermediate biosynthesis; chorismate biosynthesis; chorismate from D-erythrose 4-phosphate and phosphoenolpyruvate: step 7/7. Catalyzes the anti-1,4-elimination of the C-3 phosphate and the C-6 proR hydrogen from 5-enolpyruvylshikimate-3-phosphate (EPSP) to yield chorismate, which is the branch point compound that serves as the starting substrate for the three terminal pathways of aromatic amino acid biosynthesis. This reaction introduces a second double bond into the aromatic ring system. The polypeptide is Chorismate synthase (Marinobacter nauticus (strain ATCC 700491 / DSM 11845 / VT8) (Marinobacter aquaeolei)).